Here is a 75-residue protein sequence, read N- to C-terminus: UPF0154 protein MYPU_1460 (75 aa).

Residues 8-28 traverse the membrane as a helical segment; sequence GLIVGLSILFFIIGGVVAFFV.

It belongs to the UPF0154 family.

Its subcellular location is the membrane. The polypeptide is UPF0154 protein MYPU_1460 (Mycoplasmopsis pulmonis (strain UAB CTIP) (Mycoplasma pulmonis)).